We begin with the raw amino-acid sequence, 101 residues long: Apolipoprotein C-II (101 aa).

The N-terminal stretch at 1 to 22 (MGTRFLLALFLVLLVLGFEVQG) is a signal peptide. The tract at residues 66-74 (AVDEKLRDM) is lipid binding. Residues 78–101 (STAAVSTYAGIFTDQVLSMLRGEE) are lipoprotein lipase cofactor.

Belongs to the apolipoprotein C2 family. Proapolipoprotein C-II is synthesized as a sialic acid containing glycoprotein which is subsequently desialylated prior to its proteolytic processing. In terms of processing, proapolipoprotein C-II, the major form found in plasma undergoes proteolytic cleavage of its N-terminal hexapeptide to generate apolipoprotein C-II, which occurs as the minor form in plasma.

The protein resides in the secreted. Its function is as follows. Component of chylomicrons, very low-density lipoproteins (VLDL), low-density lipoproteins (LDL), and high-density lipoproteins (HDL) in plasma. Plays an important role in lipoprotein metabolism as an activator of lipoprotein lipase. Both proapolipoprotein C-II and apolipoprotein C-II can activate lipoprotein lipase. This Saimiri boliviensis boliviensis (Bolivian squirrel monkey) protein is Apolipoprotein C-II (APOC2).